A 76-amino-acid polypeptide reads, in one-letter code: Sec-independent protein translocase protein TatA (76 aa).

The chain crosses the membrane as a helical span at residues 1-21 (MGSFSIWHWLIVLVIVMLIFG). The tract at residues 47 to 76 (NADKPAEEAQPTQQVGGHTIDVEVKEKTKS) is disordered. Basic and acidic residues predominate over residues 66 to 76 (IDVEVKEKTKS).

Belongs to the TatA/E family. The Tat system comprises two distinct complexes: a TatABC complex, containing multiple copies of TatA, TatB and TatC subunits, and a separate TatA complex, containing only TatA subunits. Substrates initially bind to the TatABC complex, which probably triggers association of the separate TatA complex to form the active translocon.

Its subcellular location is the cell inner membrane. Part of the twin-arginine translocation (Tat) system that transports large folded proteins containing a characteristic twin-arginine motif in their signal peptide across membranes. TatA could form the protein-conducting channel of the Tat system. The polypeptide is Sec-independent protein translocase protein TatA (Dechloromonas aromatica (strain RCB)).